A 218-amino-acid chain; its full sequence is 7-cyano-7-deazaguanine synthase 1 (218 aa).

9-19 (YSGGMDSFTVL) provides a ligand contact to ATP. Zn(2+) contacts are provided by cysteine 185, cysteine 193, cysteine 196, and cysteine 199.

Belongs to the QueC family. It depends on Zn(2+) as a cofactor.

It catalyses the reaction 7-carboxy-7-deazaguanine + NH4(+) + ATP = 7-cyano-7-deazaguanine + ADP + phosphate + H2O + H(+). It functions in the pathway purine metabolism; 7-cyano-7-deazaguanine biosynthesis. Its function is as follows. Catalyzes the ATP-dependent conversion of 7-carboxy-7-deazaguanine (CDG) to 7-cyano-7-deazaguanine (preQ(0)). The protein is 7-cyano-7-deazaguanine synthase 1 of Colwellia psychrerythraea (strain 34H / ATCC BAA-681) (Vibrio psychroerythus).